We begin with the raw amino-acid sequence, 218 residues long: MGSERTEMRKRQMAATQETPGTAQAQHSVGNRGPNACCFCWCCCCSCSCLTVRNQEEERARRTSHELQAEGIPNCEESPAPTLEEVNAWAQSFDKLMLTPAGRNAFREFLRTEFSEENMLFWMACEELKQESNKSVIEEKARLIYEDYISILSPKEVSLDSRVREVINRNMLEPSQHTFDDAQLQIYTLMHRDSYPRFMNSAIYKDLLRSLSEKSIEA.

Positions 1-10 are enriched in basic and acidic residues; the sequence is MGSERTEMRK. The segment at 1–26 is disordered; it reads MGSERTEMRKRQMAATQETPGTAQAQ. Positions 14 to 26 are enriched in polar residues; it reads AATQETPGTAQAQ. Positions 92–208 constitute an RGS domain; sequence SFDKLMLTPA…MNSAIYKDLL (117 aa).

In terms of assembly, forms a complex with G(alpha)z/i2 subunits and mu-opioid receptors; the formation of this complex results in mu-opioid receptor desensitization. Interacts with OPRM1. Fatty acylated. Heavily palmitoylated in the cysteine string motif. In terms of processing, N- and O-glycosylated in synapsomal membranes. Post-translationally, sumoylated by SUMO1 and SUM02 in synaptosomes. The sumoylated forms act as a scaffold for sequestering mu-opioid receptor-activated G(alpha) subunits.

It localises to the membrane. The protein resides in the nucleus. Its subcellular location is the cytoplasm. Its function is as follows. Inhibits signal transduction by increasing the GTPase activity of G protein alpha subunits thereby driving them into their inactive GDP-bound form. Binds selectively to G(z)-alpha and G(alpha)-i2 subunits, accelerates their GTPase activity and regulates their signaling activities. The G(z)-alpha activity is inhibited by the phosphorylation and palmitoylation of the G-protein. Negatively regulates mu-opioid receptor-mediated activation of the G-proteins. The sequence is that of Regulator of G-protein signaling 20 (RGS20) from Gallus gallus (Chicken).